The following is an 82-amino-acid chain: M-theraphotoxin-Gr1a (82 aa).

The N-terminal stretch at 1–21 (MKTSVVFVIAGLALLSVVCYA) is a signal peptide. Residues 22–46 (SELKEQSSVNEVLSTIFHFEQPEER) constitute a propeptide that is removed on maturation. 3 disulfides stabilise this stretch: C48–C63, C55–C69, and C62–C76. F80 carries the post-translational modification Phenylalanine amide.

The protein belongs to the neurotoxin 10 (Hwtx-1) family. 52 (MTx4) subfamily. Expressed by the venom gland.

It localises to the secreted. Functionally, this cationic hydrophobic peptide acts on a lot of different channels and has an antimicrobial activity. It blocks mechanosensitive ion channels (also named stretch-activated channels or SACs), without having effect on whole-cell voltage-sensitive currents. It also affects acetylcholine receptors (nAChRs) through interactions with membrane lipids by prolonging the closing time without affecting channel conductance or opening activity. It shows high affinity for lipid bilayers. It acts by partitioning into the membrane and perturbing the interface between the channel and the lipid bilayer without necessarily being in physical contact with the channel. It inhibits atrial fibrillation as well as the membrane motor of outer hair cells at low doses. It also binds to the voltage sensor of voltage-gated potassium channels from the archaebacterium Aeropyrum pernix (KvAP) without affecting channel gating. It also shows a low inhibition on a large spectra of sodium channels (Nav1.1/SCN1A, Nav1.2/SCN2A, Nav1.3/SCN3A, Nav1.4/SCN4A, Nav1.5/SCN5A, Nav1.6/SCN8A, Nav1.7/SCN9A) (IC(50)=7.4-14 uM), and potassium channels Kv11.1/KCNH2 and Kv11.2/KCNH6 (IC(50)=11 uM for both). It exhibits antimicrobial activities against the Gram-positive bacteria B.subtilis (MIC=0.5 uM), S.aureus (MIC=2-4 uM), and S.epidermidis (MIC=4-8 uM), and Gram-negative bacteria S.typhimurium (MIC=32.64 uM), P.aeruginosa (MIC=8-16 uM), and E.coli (MIC=8-16 uM). This chain is M-theraphotoxin-Gr1a, found in Grammostola rosea (Chilean rose tarantula).